A 176-amino-acid polypeptide reads, in one-letter code: Japanin (176 aa).

Positions 1–24 are cleaved as a signal peptide; the sequence is MKVLRCLVCSFYIIVSLITTMTIG. Glutamate 47 provides a ligand contact to cholesterol. 2 cysteine pairs are disulfide-bonded: cysteine 52-cysteine 174 and cysteine 138-cysteine 162. Residues asparagine 59 and asparagine 155 are each glycosylated (N-linked (GlcNAc...) asparagine).

Belongs to the calycin superfamily. Lipocalin family. Homodimer; non-disulfide-linked. Each monomer accommodates one molecule of cholesterol in a pocket. As to expression, expressed in salivary glands.

Its subcellular location is the secreted. Functionally, salivary tick protein that modulates host immune response. This protein blocks dendritic cell (DC) differentiation from monocytes. In addition, it inhibits up-regulation of costimulatory molecules and pro-inflammatory cytokines in response to stimuli and promotes up-regulation of co-inhibitory molecules and the anti-inflammatory cytokine interleukin-10. It has a pocket to accomodate cholesterol, which may have immune-modulatory roles, either directly or through interactions with the host gut microbiota. This chain is Japanin, found in Rhipicephalus appendiculatus (Brown ear tick).